The primary structure comprises 351 residues: Xaa-Pro dipeptidase (351 aa).

Residues Asp212, Asp223, His287, Glu316, and Glu330 each coordinate Co(2+).

It belongs to the peptidase M24B family. Archaeal-type prolidase subfamily. As to quaternary structure, homodimer. Co(2+) is required as a cofactor.

It localises to the cytoplasm. It catalyses the reaction Xaa-L-Pro dipeptide + H2O = an L-alpha-amino acid + L-proline. Its function is as follows. Splits dipeptides with a prolyl in the C-terminal position and a nonpolar amino acid at the N-terminal position. This is Xaa-Pro dipeptidase (pepQ) from Pyrococcus horikoshii (strain ATCC 700860 / DSM 12428 / JCM 9974 / NBRC 100139 / OT-3).